The chain runs to 90 residues: Progonadoliberin-1 (90 aa).

Positions 1-24 are cleaved as a signal peptide; that stretch reads MSRHVTVVLLLAIVLLLSSHMIHG. Gln-25 is subject to Pyrrolidone carboxylic acid. Position 34 is a glycine amide (Gly-34).

This sequence belongs to the GnRH family. Forebrain.

It is found in the secreted. Stimulates the secretion of gonadotropins. This chain is Progonadoliberin-1 (gnrh1), found in Aquarana catesbeiana (American bullfrog).